Consider the following 163-residue polypeptide: Small ribosomal subunit protein bS6 (163 aa).

A disordered region spans residues 97-163 (EEGQTAMLTN…GRNEGEGDRA (67 aa)). The span at 122-163 (RGPRRDFGDRGPRRDFGDRGPRRDGDGPRAEGGRNEGEGDRA) shows a compositional bias: basic and acidic residues.

It belongs to the bacterial ribosomal protein bS6 family.

Binds together with bS18 to 16S ribosomal RNA. The polypeptide is Small ribosomal subunit protein bS6 (Rhodospirillum centenum (strain ATCC 51521 / SW)).